The following is a 60-amino-acid chain: UPF0434 protein SG0997 (60 aa).

It belongs to the UPF0434 family.

The protein is UPF0434 protein SG0997 of Sodalis glossinidius (strain morsitans).